We begin with the raw amino-acid sequence, 349 residues long: Sphingomyelinase D (349 aa).

Positions 1 to 18 (MLLSSLISLALLSSQVVA) are cleaved as a signal peptide. H52 is a catalytic residue. Residues E72, D74, and D123 each contribute to the Mg(2+) site. Positions 310–317 (ATNDNNPW) match the SMD-tail motif.

The protein belongs to the sphingomyelinase D/phospholipase D family. The cofactor is Mg(2+).

Its subcellular location is the secreted. It catalyses the reaction a sphingomyelin + H2O = an N-acylsphing-4-enine 1-phosphate + choline + H(+). Its function is as follows. Catalyzes the hydrolysis of sphingomyelin. Sphingomyelinases D are produced by some spider in their venoms, but also by arthropods such as ticks, or pathogenic bacteria and fungi. They might play a role in pathogenicity through different mechanisms, such as membrane destabilization and host cell penetration, but also pulmonary inflammation and cutaneous lesions. The polypeptide is Sphingomyelinase D (Uncinocarpus reesii (strain UAMH 1704)).